The sequence spans 486 residues: Probable FAD-binding monooxygenase ltbD (486 aa).

Residues 186-243 (PAGDGGTNDQGPSRAQSTASSGGSGRPRSTESPQSGAQASTTPTSPPTTQSTGDDPAA) are disordered. The span at 194–206 (DQGPSRAQSTASS) shows a compositional bias: polar residues. Positions 220–241 (SGAQASTTPTSPPTTQSTGDDP) are enriched in low complexity.

This sequence belongs to the FAD-binding monooxygenase family. In terms of assembly, homodimer. It depends on FAD as a cofactor.

Functionally, probable FAD-binding monooxygenase; part of the gene cluster that mediates the biosynthesis of luteodienoside A, a glycosylated polyketide consisting of an unusual 1-O-beta-D-glucopyranosyl-myo-inositol (glucinol) ester of 3-hydroxy-2,2,4-trimethylocta-4,6-dienoic acid. The HR-PKS ltbA produces the trimethylated polyketide chain from acetyl-CoA, malonyl-CoA and S-adenosylmethionine (SAM), and the ltbA cAT domain then uses glucinol produced by the glycosyltransferase ltbB as an offloading substrate to release luteodienoside A. Since ltbA and ltbB are sufficient for the biosynthesis of luteodienoside A, the functions of the methyltransferase ltbC and the FAD-binding monooxygenase ltbD within the pathway remain obscur. The sequence is that of Probable FAD-binding monooxygenase ltbD from Aspergillus luteorubrus.